A 355-amino-acid chain; its full sequence is Elongation factor Ts, mitochondrial (355 aa).

A mitochondrion-targeting transit peptide spans 1–46; it reads MIRSLNFALRNCNKNILINSNKITINNGLLLKKNNFCTQSTSEVKV.

This sequence belongs to the EF-Ts family.

The protein resides in the mitochondrion. Functionally, associates with the EF-Tu.GDP complex and induces the exchange of GDP to GTP. It remains bound to the aminoacyl-tRNA.EF-Tu.GTP complex up to the GTP hydrolysis stage on the ribosome. This Dictyostelium discoideum (Social amoeba) protein is Elongation factor Ts, mitochondrial (tsfm).